Consider the following 308-residue polypeptide: Glycerol-3-phosphate dehydrogenase [NAD(P)+] (308 aa).

Residues Trp-13, Arg-33, and Lys-81 each contribute to the NADPH site. Sn-glycerol 3-phosphate is bound by residues Lys-81 and Gly-109. Ala-113 lines the NADPH pocket. Sn-glycerol 3-phosphate-binding residues include Lys-163, Asp-216, Ser-226, Arg-227, and Asn-228. Lys-163 (proton acceptor) is an active-site residue. Arg-227 contributes to the NADPH binding site. Glu-253 contributes to the NADPH binding site.

It belongs to the NAD-dependent glycerol-3-phosphate dehydrogenase family.

The protein localises to the cytoplasm. It carries out the reaction sn-glycerol 3-phosphate + NAD(+) = dihydroxyacetone phosphate + NADH + H(+). The enzyme catalyses sn-glycerol 3-phosphate + NADP(+) = dihydroxyacetone phosphate + NADPH + H(+). It participates in membrane lipid metabolism; glycerophospholipid metabolism. Catalyzes the reduction of the glycolytic intermediate dihydroxyacetone phosphate (DHAP) to sn-glycerol 3-phosphate (G3P), the key precursor for phospholipid synthesis. The chain is Glycerol-3-phosphate dehydrogenase [NAD(P)+] from Thermosynechococcus vestitus (strain NIES-2133 / IAM M-273 / BP-1).